The sequence spans 200 residues: LexA repressor (200 aa).

The H-T-H motif DNA-binding region spans 27-47; that stretch reads VREICNAVELRSTSTVHGHLK. Active-site for autocatalytic cleavage activity residues include S124 and K161.

This sequence belongs to the peptidase S24 family. As to quaternary structure, homodimer.

It catalyses the reaction Hydrolysis of Ala-|-Gly bond in repressor LexA.. In terms of biological role, represses a number of genes involved in the response to DNA damage (SOS response), including recA and lexA. In the presence of single-stranded DNA, RecA interacts with LexA causing an autocatalytic cleavage which disrupts the DNA-binding part of LexA, leading to derepression of the SOS regulon and eventually DNA repair. This Clostridium tetani (strain Massachusetts / E88) protein is LexA repressor.